The primary structure comprises 431 residues: Glutamate-1-semialdehyde 2,1-aminomutase (431 aa).

Lys269 carries the N6-(pyridoxal phosphate)lysine modification.

It belongs to the class-III pyridoxal-phosphate-dependent aminotransferase family. HemL subfamily. As to quaternary structure, homodimer. It depends on pyridoxal 5'-phosphate as a cofactor.

The protein resides in the cytoplasm. It carries out the reaction (S)-4-amino-5-oxopentanoate = 5-aminolevulinate. It participates in porphyrin-containing compound metabolism; protoporphyrin-IX biosynthesis; 5-aminolevulinate from L-glutamyl-tRNA(Glu): step 2/2. Its pathway is porphyrin-containing compound metabolism; chlorophyll biosynthesis. The chain is Glutamate-1-semialdehyde 2,1-aminomutase from Pelodictyon phaeoclathratiforme (strain DSM 5477 / BU-1).